The following is a 58-amino-acid chain: Arabinogalactan protein 21 (58 aa).

An N-terminal signal peptide occupies residues 1–24 (MEAMKMKMMVFIMVVAVAFSAATA). 4-hydroxyproline occurs at positions 30, 32, and 34. Pro-30, Pro-32, and Pro-34 each carry an O-linked (Ara...) hydroxyproline glycan. A lipid anchor (GPI-anchor amidated serine) is attached at Ser-36. Positions 37-58 (DAAMFVPALFASVVALASGFIF) are cleaved as a propeptide — removed in mature form.

This sequence belongs to the AG-peptide AGP family. Post-translationally, contains 4-hydroxyproline; hydroxylated on Pro-30, Pro-32 and Pro-34. O-glycosylated on hydroxyprolines; noncontiguous hydroxylproline residues are glycosylated with arabinogalactan.

The protein resides in the cell membrane. In terms of biological role, proteoglycan that seems to be implicated in diverse developmental roles such as differentiation, cell-cell recognition, embryogenesis and programmed cell death. The protein is Arabinogalactan protein 21 of Arabidopsis thaliana (Mouse-ear cress).